Here is a 200-residue protein sequence, read N- to C-terminus: MTRSSRFLGTASPPPPEEILAAETDMVVILSALLCALVCVAGLAAVARCAWLRRLTGVNPAAVGEAPPPNKGLKKKALQALPKSTYTASASTAAAADDLPCSSVGDGDSSTECAICITEFSEGEEIRILPLCSHAFHVACIDKWLTSRSSCPSCRRILVPVKCDRCGHHASTAETQVKDQPPHHQHPSQFTSAIIPAFLP.

The chain crosses the membrane as a helical span at residues 26 to 46 (MVVILSALLCALVCVAGLAAV). The segment at 113-155 (CAICITEFSEGEEIRILPLCSHAFHVACIDKWLTSRSSCPSCR) adopts an RING-type; atypical zinc-finger fold.

This sequence belongs to the RING-type zinc finger family. ATL subfamily. As to quaternary structure, interacts with BIK1.

The protein resides in the membrane. It carries out the reaction S-ubiquitinyl-[E2 ubiquitin-conjugating enzyme]-L-cysteine + [acceptor protein]-L-lysine = [E2 ubiquitin-conjugating enzyme]-L-cysteine + N(6)-ubiquitinyl-[acceptor protein]-L-lysine.. Its pathway is protein modification; protein ubiquitination. E3 ubiquitin-protein ligase that possess E3 ubiquitin ligase activity in vitro and mediates protein monoubiquitination. Triggers the monoubiquitination of phosphorylated BIK1 in response to pathogen-associated molecular pattern (PAMP) detection. May be involved in the early steps of the plant defense signaling pathway. This is Probable E3 ubiquitin-protein ligase ATL45 from Arabidopsis thaliana (Mouse-ear cress).